The primary structure comprises 191 residues: Fe/S biogenesis protein NfuA (191 aa).

Residues C149 and C152 each contribute to the [4Fe-4S] cluster site.

The protein belongs to the NfuA family. In terms of assembly, homodimer. [4Fe-4S] cluster is required as a cofactor.

Its function is as follows. Involved in iron-sulfur cluster biogenesis. Binds a 4Fe-4S cluster, can transfer this cluster to apoproteins, and thereby intervenes in the maturation of Fe/S proteins. Could also act as a scaffold/chaperone for damaged Fe/S proteins. The polypeptide is Fe/S biogenesis protein NfuA (Escherichia coli O139:H28 (strain E24377A / ETEC)).